Consider the following 225-residue polypeptide: Agamous-like MADS-box protein TM6 (225 aa).

The MADS-box domain occupies 1-61; the sequence is MGRGKIEIKR…GKFHEYTSPT (61 aa). The 91-residue stretch at 84 to 174 folds into the K-box domain; sequence YERMQENLRK…LLNFEAKCDD (91 aa).

Expressed during flower development in stamens, petals and carpels. Expressed in fruits and seeds.

The protein resides in the nucleus. Functionally, probable transcription factor involved in flower development. The sequence is that of Agamous-like MADS-box protein TM6 from Vitis vinifera (Grape).